The chain runs to 309 residues: SUR7 family protein FMP45 (309 aa).

Residues 1–5 (MIFKR) lie on the Cytoplasmic side of the membrane. A helical transmembrane segment spans residues 6 to 26 (FVNLLVFLFLLGAGLLTFFLI). Topologically, residues 27 to 116 (LSGGRESGTL…YYLSRVGWAM (90 aa)) are extracellular. Asparagine 73 carries an N-linked (GlcNAc...) asparagine glycan. Residues 117-137 (LLISLFFIVLALVPGFLATFL) traverse the membrane as a helical segment. The Cytoplasmic portion of the chain corresponds to 138-140 (PFK). Residues 141–161 (AVPVLYCVLSWLAFFFIILAA) traverse the membrane as a helical segment. The Extracellular segment spans residues 162 to 188 (CLYTGCYVKARKTFRNSGRSARLGPKN). Residues 189 to 209 (FAFIWTSVFLMLVNAIWSTIF) form a helical membrane-spanning segment. Residues 210 to 309 (SATHKAHSTY…GLAGPVTVRD (100 aa)) are Cytoplasmic-facing. Residues serine 230 and serine 232 each carry the phosphoserine modification. Threonine 235 is subject to Phosphothreonine. The interval 253-309 (GPITAAPVVGQPQPTTTTTPAGNGKFFQKLKTRKQVPSAELEPAGDGGLAGPVTVRD) is disordered. Over residues 258–274 (APVVGQPQPTTTTTPAG) the composition is skewed to low complexity.

This sequence belongs to the SUR7 family.

It localises to the cell membrane. In terms of biological role, involved in sporulation and affects the sphingolipid composition of the plasma membrane. The protein is SUR7 family protein FMP45 (FMP45) of Saccharomyces cerevisiae (strain ATCC 204508 / S288c) (Baker's yeast).